Reading from the N-terminus, the 142-residue chain is Large ribosomal subunit protein uL11 (142 aa).

Belongs to the universal ribosomal protein uL11 family. In terms of assembly, part of the ribosomal stalk of the 50S ribosomal subunit. Interacts with L10 and the large rRNA to form the base of the stalk. L10 forms an elongated spine to which L12 dimers bind in a sequential fashion forming a multimeric L10(L12)X complex. One or more lysine residues are methylated.

Functionally, forms part of the ribosomal stalk which helps the ribosome interact with GTP-bound translation factors. The chain is Large ribosomal subunit protein uL11 from Dichelobacter nodosus (strain VCS1703A).